The primary structure comprises 113 residues: Nascent polypeptide-associated complex protein (113 aa).

The 69-residue stretch at 5–73 (GMNPAKMKQM…AKEVPKSLEI (69 aa)) folds into the NAC-A/B domain.

The protein belongs to the NAC-alpha family. Homodimer. Interacts with the ribosome. Binds ribosomal RNA.

Its function is as follows. Contacts the emerging nascent chain on the ribosome. This Methanosarcina acetivorans (strain ATCC 35395 / DSM 2834 / JCM 12185 / C2A) protein is Nascent polypeptide-associated complex protein.